The following is a 426-amino-acid chain: Serine--tRNA ligase (426 aa).

Residue 233–235 participates in L-serine binding; sequence TAE. 264-266 is an ATP binding site; that stretch reads RSE. Position 287 (Glu-287) interacts with L-serine. 351 to 354 serves as a coordination point for ATP; it reads EISS. Ser-387 is a binding site for L-serine.

Belongs to the class-II aminoacyl-tRNA synthetase family. Type-1 seryl-tRNA synthetase subfamily. As to quaternary structure, homodimer. The tRNA molecule binds across the dimer.

Its subcellular location is the cytoplasm. It catalyses the reaction tRNA(Ser) + L-serine + ATP = L-seryl-tRNA(Ser) + AMP + diphosphate + H(+). The catalysed reaction is tRNA(Sec) + L-serine + ATP = L-seryl-tRNA(Sec) + AMP + diphosphate + H(+). The protein operates within aminoacyl-tRNA biosynthesis; selenocysteinyl-tRNA(Sec) biosynthesis; L-seryl-tRNA(Sec) from L-serine and tRNA(Sec): step 1/1. In terms of biological role, catalyzes the attachment of serine to tRNA(Ser). Is also able to aminoacylate tRNA(Sec) with serine, to form the misacylated tRNA L-seryl-tRNA(Sec), which will be further converted into selenocysteinyl-tRNA(Sec). This is Serine--tRNA ligase from Pseudomonas syringae pv. tomato (strain ATCC BAA-871 / DC3000).